The primary structure comprises 168 residues: Replicase polyprotein 1ab (168 aa).

In terms of domain architecture, Nidovirus-type SAM-dependent 2'-O-MTase spans 1–165; that stretch reads PNTKSIDGEN…KLLNFGNHLV (165 aa).

In terms of biological role, the replicase polyprotein of coronaviruses is a multifunctional protein: it contains the activities necessary for the transcription of negative stranded RNA, leader RNA, subgenomic mRNAs and progeny virion RNA as well as proteinases responsible for the cleavage of the polyprotein into functional products. The sequence is that of Replicase polyprotein 1ab (rep) from Canine coronavirus (strain Insavc-1) (CCoV).